Consider the following 536-residue polypeptide: Octopamine receptor beta-2R (536 aa).

Positions 1 to 26 (MLLCDGLGPEPPRQRHRNRTSAARIR) are disordered. Over 1–157 (MLLCDGLGPE…LDNIVWVFKA (157 aa)) the chain is Extracellular. A compositionally biased stretch (basic residues) spans 14–26 (QRHRNRTSAARIR). N-linked (GlcNAc...) asparagine glycans are attached at residues Asn18, Asn92, Asn113, and Asn126. The chain crosses the membrane as a helical span at residues 158 to 178 (FVMLLIIIAAICGNLLVIISV). Over 179–190 (MRVRKLRVITNY) the chain is Cytoplasmic. A helical transmembrane segment spans residues 191 to 211 (FVVSLAMADIMVAIMAMTFNF). Residues 212–233 (SVQVTGRWNFSPFLCDLWNSLD) lie on the Extracellular side of the membrane. Residues 234-256 (VYFSTASILHLCCISVDRYYAIV) form a helical membrane-spanning segment. The Cytoplasmic segment spans residues 257-270 (KPLKYPISMTKRVV). A helical membrane pass occupies residues 271-291 (GIMLLNTWISPALLSFLPIFI). Residues 292–320 (GWYTTPQHQQFVIQNPTQCSFVVNKYYAV) lie on the Extracellular side of the membrane. The helical transmembrane segment at 321–341 (ISSSISFWIPCTIMIFTYLAI) threads the bilayer. Residues 342-412 (FREANRQEKQ…MKREHKAART (71 aa)) are Cytoplasmic-facing. A helical transmembrane segment spans residues 413 to 433 (LGIIMGTFILCWLPFFLWYTL). Residues 434–444 (SMTCEECQVPD) are Extracellular-facing. Residues 445 to 465 (IVVSILFWIGYFNSTLNPLIY) form a helical membrane-spanning segment. At 466 to 536 (AYFNRDFREA…RRQSQMVDNL (71 aa)) the chain is on the cytoplasmic side.

Belongs to the G-protein coupled receptor 1 family. In the adult, expressed in the superior protocerebrum and the optic lobe medulla of the central nervous system, nurse cells of egg chambers in the ovary at oogenic stages 1-10, and spermatogonia and spermatocytes in the testis. Expressed in the oviduct epithelium. Also expressed in the spermatheca. Expressed in embryonic and larval ventral nerve cord and brain lobe, embryonic and larval salivary glands and larval imaginal disk and midgut. Also expressed in larval synaptic boutons.

The protein localises to the cell membrane. Autoreceptor for octopamine (OA), which is a neurotransmitter, neurohormone, and neuromodulator in invertebrates. Essential for ovulation and fertilization. During ovulation it mediates the OA-induced relaxation of the oviduct visceral muscles, by increasing cAMP levels and activating effectors such as calmodulin-dependent kinase II (CaMKII) and cAMP-dependent protein kinase A (PKA) pathways. Positively regulates synaptic growth; an action that is antagonized by Octbeta1R. In Drosophila melanogaster (Fruit fly), this protein is Octopamine receptor beta-2R.